We begin with the raw amino-acid sequence, 176 residues long: Prepronociceptin (176 aa).

An N-terminal signal peptide occupies residues 1–19 (MKVLLCDLLLLSLFSSVFS). 2 propeptides span residues 20-95 (SCQR…MQHL) and 169-176 (TLHQNGNV).

The protein belongs to the opioid neuropeptide precursor family. In terms of processing, specific enzymatic cleavages at paired basic residues probably yield other active peptides besides nociceptin. Post-translationally, the N-terminal domain contains 6 conserved cysteines thought to be involved in disulfide bonding and/or processing. As to expression, predominantly expressed in the brain and spinal cord. Also expressed and secreted by peripheral blood neutrophils following degranulation.

Its subcellular location is the secreted. In terms of biological role, ligand of the opioid receptor-like receptor OPRL1. It may act as a transmitter in the brain by modulating nociceptive and locomotor behavior. May be involved in neuronal differentiation and development. Its function is as follows. Blocks nociceptin action in pain transmission by inhibiting nociceptin-induced hyperalgesia and allodynia. Has potent analgesic activity. In Homo sapiens (Human), this protein is Prepronociceptin (PNOC).